A 197-amino-acid chain; its full sequence is Probable nicotinate-nucleotide adenylyltransferase (197 aa).

Belongs to the NadD family.

The enzyme catalyses nicotinate beta-D-ribonucleotide + ATP + H(+) = deamido-NAD(+) + diphosphate. Its pathway is cofactor biosynthesis; NAD(+) biosynthesis; deamido-NAD(+) from nicotinate D-ribonucleotide: step 1/1. Its function is as follows. Catalyzes the reversible adenylation of nicotinate mononucleotide (NaMN) to nicotinic acid adenine dinucleotide (NaAD). The sequence is that of Probable nicotinate-nucleotide adenylyltransferase from Bordetella avium (strain 197N).